A 269-amino-acid chain; its full sequence is uncharacterized protein (269 aa).

The segment covering 181–191 (QKKELSPHEIA) has biased composition (basic and acidic residues). A disordered region spans residues 181-203 (QKKELSPHEIAESPSSHSTSPMG). Positions 193–202 (SPSSHSTSPM) are enriched in polar residues. Position 200 is a phosphoserine (serine 200).

This is an uncharacterized protein from Schizosaccharomyces pombe (strain 972 / ATCC 24843) (Fission yeast).